Consider the following 634-residue polypeptide: 1-deoxy-D-xylulose-5-phosphate synthase (634 aa).

Residues His-74 and 115–117 (AHS) each bind thiamine diphosphate. Asp-146 provides a ligand contact to Mg(2+). Residues 147–148 (GA), Asn-176, Tyr-283, and Glu-365 each bind thiamine diphosphate. Mg(2+) is bound at residue Asn-176.

It belongs to the transketolase family. DXPS subfamily. As to quaternary structure, homodimer. The cofactor is Mg(2+). It depends on thiamine diphosphate as a cofactor.

The enzyme catalyses D-glyceraldehyde 3-phosphate + pyruvate + H(+) = 1-deoxy-D-xylulose 5-phosphate + CO2. It participates in metabolic intermediate biosynthesis; 1-deoxy-D-xylulose 5-phosphate biosynthesis; 1-deoxy-D-xylulose 5-phosphate from D-glyceraldehyde 3-phosphate and pyruvate: step 1/1. Catalyzes the acyloin condensation reaction between C atoms 2 and 3 of pyruvate and glyceraldehyde 3-phosphate to yield 1-deoxy-D-xylulose-5-phosphate (DXP). The polypeptide is 1-deoxy-D-xylulose-5-phosphate synthase (Burkholderia ambifaria (strain MC40-6)).